Consider the following 1006-residue polypeptide: Transcription factor tau subunit sfc4 (1006 aa).

Residues 64–91 (GLWSDEESDYEGSDDESNFSKTASRTED) form a disordered region. The span at 66–80 (WSDEESDYEGSDDES) shows a compositional bias: acidic residues. 6 TPR repeats span residues 133–166 (QQML…DNNV), 205–238 (HELW…KPPN), 277–310 (ASIL…FYQY), 396–429 (HLFR…PPDY), 431–464 (WGML…EPAQ), and 466–499 (IGLW…DNSN). Positions 506-554 (LAEINELQDNRDAALEIVTNIFEQRRNINELEREQSQNEDHEKNVGSQL) form a coiled coil. 2 TPR repeats span residues 841 to 874 (PVLV…NPDC) and 924 to 957 (QEAL…SPMS).

In terms of assembly, component of the TFIIIC complex including sfc1, sfc3, sfc4, sfc6 and sfc7. The subunits are organized in two globular domains, tauA and tauB, connected by a proteolysis-sensitive and flexible linker. Interacts with sfc1, sfc3 and sfc6. In terms of processing, phosphorylated.

Its subcellular location is the nucleus. Its function is as follows. TFIIIC mediates tRNA and 5S RNA gene activation by binding to intragenic promoter elements. Upstream of the transcription start site, TFIIIC assembles the initiation complex TFIIIB-TFIIIC-tDNA, which is sufficient for RNA polymerase III recruitment and function. Part of the tauA domain of TFIIIC that binds boxA DNA promoter sites of tRNA and similar genes. Sfc4 is the TFIIIB assembling subunit of TFIIIC. The protein is Transcription factor tau subunit sfc4 of Schizosaccharomyces pombe (strain 972 / ATCC 24843) (Fission yeast).